We begin with the raw amino-acid sequence, 435 residues long: Zinc finger CCCH domain-containing protein 17 (435 aa).

Disordered regions lie at residues 1–30 (MDIETDGRFGNKRVHHRLGPANGAASSSTS) and 58–107 (TAKR…GPRH). A C3H1-type 1 zinc finger spans residues 28 to 54 (STSGKVCIHWRAGRCNRFPCPYLHSEL). Positions 77–103 (SGGGGGRGAGGAGGPNKWGRGPGGADG) are enriched in gly residues. Residues 108 to 135 (KVPDRPCRYFLAGDCSYGEKCRYPHSYS) form a C3H1-type 2 zinc finger. 7 WD repeats span residues 148-189 (GHEK…GVIN), 191-225 (GREIGCMISEGPWLFVGIPDAVKVWNMQTQAEMNL), 227-264 (GPTGQVYALAVGNELLFAATQDGRILAWRFSAATNGFE), 271-308 (GHQLAVVSLVVGAMRLYSASMDKTIRVWDLATLQCIQT), 311-348 (DHTGVVMSVLCWDQFLLSCSLDQTIKVWAATESGSLEV), 355-395 (EHGA…DRGR), and 397-435 (FSKQEIRAIQVGPSGLFFTGDGTGELKVWQWVIDGSQTK).

In Oryza sativa subsp. japonica (Rice), this protein is Zinc finger CCCH domain-containing protein 17.